Here is a 275-residue protein sequence, read N- to C-terminus: NAD kinase (275 aa).

D68 (proton acceptor) is an active-site residue. NAD(+) is bound by residues 68-69, R73, 136-137, K147, R164, D166, 177-182, A201, and Q236; these read DG, NE, and TAYAMS.

It belongs to the NAD kinase family. A divalent metal cation serves as cofactor.

The protein localises to the cytoplasm. It catalyses the reaction NAD(+) + ATP = ADP + NADP(+) + H(+). Its function is as follows. Involved in the regulation of the intracellular balance of NAD and NADP, and is a key enzyme in the biosynthesis of NADP. Catalyzes specifically the phosphorylation on 2'-hydroxyl of the adenosine moiety of NAD to yield NADP. This Methanosarcina barkeri (strain Fusaro / DSM 804) protein is NAD kinase.